A 367-amino-acid chain; its full sequence is Folliculin-like protein bhd1 (367 aa).

2 disordered regions span residues 41 to 75 (RSIG…QSST) and 92 to 115 (SKGP…SPIS). Residues 54 to 64 (EAFKNELDNRN) are compositionally biased toward basic and acidic residues. Polar residues-rich tracts occupy residues 65-75 (NADSQSLQSST) and 99-115 (RVNS…SPIS). The uDENN FLCN/SMCR8-type domain maps to 131-302 (FSVPDVQPRL…SNIGTAPSYE (172 aa)).

It belongs to the folliculin family.

The protein resides in the nucleus. The protein localises to the cytoplasm. The sequence is that of Folliculin-like protein bhd1 (bhd1) from Schizosaccharomyces pombe (strain 972 / ATCC 24843) (Fission yeast).